An 809-amino-acid chain; its full sequence is Protein PHOX3 (809 aa).

The segment at 1–22 (MEKQNEEISTDDAETSQSQLVD) is disordered. TPR repeat units follow at residues 126-159 (AQGLKEEGNKLFQKRDYDGAMFKYGEAIKILPKD), 164-199 (SHVRANVASCYMQLEPGEFAKAIHECDLALSVTPDH), 200-233 (NKALLKRARCYEALNKLDLALRDVCMVSKLDPKN), 235-265 (MASEIVEKLKRTLESKGLRINNSVIELPPDY), and 274-311 (AALWAKLGKVRVKKTKKSNQVEEKSEGEGEDVEPEKKN). The interval 288-339 (TKKSNQVEEKSEGEGEDVEPEKKNNVLAEKGKEKIKMKVKGKQSDKRSDTSK) is disordered. Ser298 bears the Phosphoserine mark. Over residues 307-339 (PEKKNNVLAEKGKEKIKMKVKGKQSDKRSDTSK) the composition is skewed to basic and acidic residues. The 80-residue stretch at 359 to 438 (NKDVKFVYSD…GTMRFYVVEV (80 aa)) folds into the PB1 domain. TPR repeat units follow at residues 508–541 (SEAMEEVVTSDAAQGPFDRAAQQFQEVAARSLLN), 563–597 (ESVSEQVKTAYECAKKEHANAKEKYEEAMKIKPEC), and 615–648 (SWYYVLVSHLDLKTWPYADVVQFYQSAESNIKKS). Residues 656-686 (ETGKESEPSQAGKTDCLTHEKDLGSSTQNNP) form a disordered region. A TPR 9 repeat occupies 709-741 (SIMEYKLDQPFWRESLEAAMEKFELAGTCKDDV).

In terms of biological role, carboxylate clamp type tetratricopeptide repeat protein that may act as a potential Hsp90/Hsp70 co-chaperone. Contributes to polar growth of root hairs. This is Protein PHOX3 from Arabidopsis thaliana (Mouse-ear cress).